A 362-amino-acid polypeptide reads, in one-letter code: Dual-specificity RNA methyltransferase RlmN (362 aa).

The Proton acceptor role is filled by E100. The Radical SAM core domain maps to 106 to 345 (EPDRNTLCIS…VFIRNSRGED (240 aa)). A disulfide bridge connects residues C113 and C350. [4Fe-4S] cluster-binding residues include C120, C124, and C127. S-adenosyl-L-methionine is bound by residues 177 to 178 (GE), S209, 231 to 233 (SLH), and N307. C350 serves as the catalytic S-methylcysteine intermediate.

The protein belongs to the radical SAM superfamily. RlmN family. [4Fe-4S] cluster serves as cofactor.

It is found in the cytoplasm. The catalysed reaction is adenosine(2503) in 23S rRNA + 2 reduced [2Fe-2S]-[ferredoxin] + 2 S-adenosyl-L-methionine = 2-methyladenosine(2503) in 23S rRNA + 5'-deoxyadenosine + L-methionine + 2 oxidized [2Fe-2S]-[ferredoxin] + S-adenosyl-L-homocysteine. It catalyses the reaction adenosine(37) in tRNA + 2 reduced [2Fe-2S]-[ferredoxin] + 2 S-adenosyl-L-methionine = 2-methyladenosine(37) in tRNA + 5'-deoxyadenosine + L-methionine + 2 oxidized [2Fe-2S]-[ferredoxin] + S-adenosyl-L-homocysteine. Its function is as follows. Specifically methylates position 2 of adenine 2503 in 23S rRNA and position 2 of adenine 37 in tRNAs. m2A2503 modification seems to play a crucial role in the proofreading step occurring at the peptidyl transferase center and thus would serve to optimize ribosomal fidelity. This is Dual-specificity RNA methyltransferase RlmN from Desulfotalea psychrophila (strain LSv54 / DSM 12343).